A 266-amino-acid polypeptide reads, in one-letter code: Probable sporulation sigma-E factor-processing peptidase (266 aa).

The next 4 helical transmembrane spans lie at 36 to 52 (LILA…VLVI), 60 to 76 (SLIF…IICF), 89 to 105 (AVLI…CFFI), and 126 to 142 (WILI…NRII). Asp-174 is a catalytic residue.

This sequence belongs to the peptidase U4 family.

Its subcellular location is the cell membrane. Probable aspartic protease that is responsible for the proteolytic cleavage of the RNA polymerase sigma E factor (SigE/spoIIGB) to yield the active peptide in the mother cell during sporulation. Responds to a signal from the forespore that is triggered by the extracellular signal protein SpoIIR. This Clostridium acetobutylicum (strain ATCC 824 / DSM 792 / JCM 1419 / IAM 19013 / LMG 5710 / NBRC 13948 / NRRL B-527 / VKM B-1787 / 2291 / W) protein is Probable sporulation sigma-E factor-processing peptidase (spoIIGA).